The sequence spans 385 residues: Cytochrome b (385 aa).

At 1 to 27 (MAFRKSNVYLSLVNSYIIDSPQPSSIN) the chain is on the mitochondrial matrix side. Position 16 (Tyr-16) interacts with a ubiquinone. Residues 28–51 (YWWNMGSLLGLCLVIQIVTGIFMA) traverse the membrane as a helical segment. Over 52 to 74 (MHYSSNIELAFSSVEHIMRDVHN) the chain is Mitochondrial intermembrane. Residues 75–102 (GYILRYLHANGASFFFMVMFMHMAKGLY) form a helical membrane-spanning segment. Residues His-82 and His-96 each contribute to the heme b site. The Mitochondrial matrix segment spans residues 103–110 (YGSYRSPR). Residues 111–135 (VTLWNVGVIIFILTIATAFLGYCCV) traverse the membrane as a helical segment. Over 136-172 (YGQMSHWGATVITNLFSAIPFVGNDIVSWLWGGFSVS) the chain is Mitochondrial intermembrane. A helical membrane pass occupies residues 173–204 (NPTIQRFFALHYLVPFIIAAMVIMHLMALHIH). 2 residues coordinate heme b: His-183 and His-197. His-202 lines the a ubiquinone pocket. At 205 to 223 (GSSNPLGITGNLDRIPMHS) the chain is on the mitochondrial matrix side. The chain crosses the membrane as a helical span at residues 224-246 (YFIFKDLVTVFLFMLILALFVFY). Over 247–287 (SPNTLGHPDNYIPGNPLVTPASIVPEWYLLPFYAILRSIPD) the chain is Mitochondrial intermembrane. Residues 288-308 (KLLGVITMFAAILVLLVLPFT) form a helical membrane-spanning segment. At 309-319 (DRSVVRGNTFK) the chain is on the mitochondrial matrix side. The helical transmembrane segment at 320 to 340 (VLSKFFFFIFVFNFVLLGQIG) threads the bilayer. Residues 341–347 (ACHVEVP) lie on the Mitochondrial intermembrane side of the membrane. The chain crosses the membrane as a helical span at residues 348–364 (YVLMGQIATFIYFAYFL). At 365 to 385 (IIVPVISTIENVLFYIGRVNK) the chain is on the mitochondrial matrix side.

This sequence belongs to the cytochrome b family. In terms of assembly, component of the ubiquinol-cytochrome c oxidoreductase (cytochrome b-c1 complex, complex III, CIII), a multisubunit enzyme composed of 10 subunits. The complex is composed of 3 respiratory subunits cytochrome b (COB), cytochrome c1 (CYT1) and Rieske protein (RIP1), 2 core protein subunits COR1 and QCR2, and 5 low-molecular weight protein subunits QCR6, QCR7, QCR8, QCR9 and QCR10. The complex exists as an obligatory dimer and forms supercomplexes (SCs) in the inner mitochondrial membrane with a monomer or a dimer of cytochrome c oxidase (complex IV, CIV), resulting in 2 different assemblies (supercomplexes III(2)IV and III(2)IV(2)). Requires heme b as cofactor.

The protein localises to the mitochondrion inner membrane. The catalysed reaction is a quinol + 2 Fe(III)-[cytochrome c](out) = a quinone + 2 Fe(II)-[cytochrome c](out) + 2 H(+)(out). Component of the ubiquinol-cytochrome c oxidoreductase, a multisubunit transmembrane complex that is part of the mitochondrial electron transport chain which drives oxidative phosphorylation. The respiratory chain contains 3 multisubunit complexes succinate dehydrogenase (complex II, CII), ubiquinol-cytochrome c oxidoreductase (cytochrome b-c1 complex, complex III, CIII) and cytochrome c oxidase (complex IV, CIV), that cooperate to transfer electrons derived from NADH and succinate to molecular oxygen, creating an electrochemical gradient over the inner membrane that drives transmembrane transport and the ATP synthase. The cytochrome b-c1 complex catalyzes electron transfer from ubiquinol to cytochrome c, linking this redox reaction to translocation of protons across the mitochondrial inner membrane, with protons being carried across the membrane as hydrogens on the quinol. In the process called Q cycle, 2 protons are consumed from the matrix, 4 protons are released into the intermembrane space and 2 electrons are passed to cytochrome c. Cytochrome b is a catalytic core subunit containing 2 b-type hemes BL and BH topographically segregated in the quinone reduction (Qi) and quinol oxidation (Q0) sites on opposite sides of the membrane. The polypeptide is Cytochrome b (COB) (Saccharomyces cerevisiae (strain ATCC 204508 / S288c) (Baker's yeast)).